We begin with the raw amino-acid sequence, 534 residues long: Hypothemycin biosynthesis cluster protein hpm4 (534 aa).

Disordered regions lie at residues 34–61 (IEPA…SDGP), 110–130 (LQSP…PLRL), and 236–287 (DGTG…KKCI). Low complexity-rich tracts occupy residues 112 to 127 (SPTT…SCAP) and 258 to 275 (TVSS…ACQT).

The protein operates within secondary metabolite biosynthesis. In terms of biological role, part of the gene cluster that mediates the biosynthesis of hypothemycin, a resorcylic acid lactone (RAL) that irreversibly inhibits a subset of protein kinases with a conserved cysteine in the ATP binding site such as human ERK2. The first step is performed by both PKSs hmp3 and hmp8 and leads to the production of 7',8'-dehydrozearalenol (DHZ). The highly reducing PKS hpm8 synthesizes the reduced hexaketide (7S,11S,2E,8E)-7,11-dihydroxy-dodeca-2,8-dienoate, which is transferred downstream to the non-reducing PKS hpm3. Hpm3 then extends the reduced hexaketide to a nonaketide, after which regioselective cyclization and macrolactonization affords DHZ. The next step is the conversion of DHZ into aigialomycin C and is performed by the O-methyltransferase hmp5, the FAD-binding monooxygenase hmp7, and the cytochrome P450 monooxygenase hmp1. The wide substrate tolerance of the hmp5 and hmp7 implies that the reactions from DHZ to aigialomycin C can occur in any order. The steps from aigialomycin C to hypothemycin are less well established. The FAD-linked oxidoreductase hmp9 presumably catalyzes oxidation of the C-6' hydroxyl to a ketone. The timing of this oxidation is important, since the resulting enone functional group is a Michael acceptor that can react spontaneously with glutathione, an abundant metabolite in fungal cells. The glutathione S-transferase hmp2 catalyzes cis-trans isomerization of the 7',8' double bond with equilibrium favoring the trans isomer. The hpm6-encoded transporter might preferentially pump hypothemycin out of the cell relative to the trans isomer aigialomycin A. The cis-to-trans isomerization may be coupled with C-4' hydroxylation, since all known hypothemycin analogs containing the enone functional group also have hydroxyl groups at both C-4' and C-5'. The chain is Hypothemycin biosynthesis cluster protein hpm4 from Hypomyces subiculosus (Nectria subiculosa).